A 148-amino-acid chain; its full sequence is Lysozyme C-3 (148 aa).

The N-terminal stretch at 1–18 (MKTLLVLALLLLSVSVQA) is a signal peptide. Residues 19 to 148 (KVYDRCEFAR…VSQYIRGCKL (130 aa)) form the C-type lysozyme domain. 4 cysteine pairs are disulfide-bonded: cysteine 24-cysteine 146, cysteine 48-cysteine 134, cysteine 83-cysteine 99, and cysteine 95-cysteine 113. Active-site residues include glutamate 53 and aspartate 71.

This sequence belongs to the glycosyl hydrolase 22 family. As to quaternary structure, monomer.

Its subcellular location is the secreted. The enzyme catalyses Hydrolysis of (1-&gt;4)-beta-linkages between N-acetylmuramic acid and N-acetyl-D-glucosamine residues in a peptidoglycan and between N-acetyl-D-glucosamine residues in chitodextrins.. Functionally, lysozymes have primarily a bacteriolytic function; those in tissues and body fluids are associated with the monocyte-macrophage system and enhance the activity of immunoagents. This chain is Lysozyme C-3, found in Sus scrofa (Pig).